A 240-amino-acid polypeptide reads, in one-letter code: Tetrahydromethanopterin S-methyltransferase subunit A (240 aa).

Residues 1 to 218 (MADKKEPAPG…KFHSGVHAGK (218 aa)) are Cytoplasmic-facing. H85 is a binding site for 5-hydroxybenzimidazolylcob(I)amide. Residues 219–239 (IEGAMIGLTVTISLLGLLLLG) traverse the membrane as a helical segment. Residue R240 is a topological domain, extracellular.

This sequence belongs to the MtrA family. As to quaternary structure, the complex is composed of 8 subunits; MtrA, MtrB, MtrC, MtrD, MtrE, MtrF, MtrG and MtrH. It depends on 5-hydroxybenzimidazolylcob(I)amide as a cofactor.

Its subcellular location is the cell membrane. The catalysed reaction is 5-methyl-5,6,7,8-tetrahydromethanopterin + coenzyme M + 2 Na(+)(in) = 5,6,7,8-tetrahydromethanopterin + methyl-coenzyme M + 2 Na(+)(out). The protein operates within one-carbon metabolism; methanogenesis from CO(2); methyl-coenzyme M from 5,10-methylene-5,6,7,8-tetrahydromethanopterin: step 2/2. Part of a complex that catalyzes the formation of methyl-coenzyme M and tetrahydromethanopterin from coenzyme M and methyl-tetrahydromethanopterin. This is an energy-conserving, sodium-ion translocating step. The protein is Tetrahydromethanopterin S-methyltransferase subunit A of Methanosarcina barkeri (strain Fusaro / DSM 804).